The following is a 183-amino-acid chain: Large ribosomal subunit protein uL18 (183 aa).

This sequence belongs to the universal ribosomal protein uL18 family. In terms of assembly, part of the 50S ribosomal subunit. Contacts the 5S and 23S rRNAs.

Functionally, this is one of the proteins that bind and probably mediate the attachment of the 5S RNA into the large ribosomal subunit, where it forms part of the central protuberance. The chain is Large ribosomal subunit protein uL18 from Halobacterium salinarum (strain ATCC 29341 / DSM 671 / R1).